The following is a 146-amino-acid chain: Snaclec 1 (146 aa).

An N-terminal signal peptide occupies residues methionine 1–alanine 23. Intrachain disulfides connect cysteine 25–cysteine 36, cysteine 53–cysteine 142, and cysteine 119–cysteine 134. The C-type lectin domain occupies tyrosine 32–lysine 143.

Belongs to the snaclec family. As to quaternary structure, heterodimer; disulfide-linked. As to expression, expressed by the venom gland.

It localises to the secreted. In terms of biological role, interferes with one step of hemostasis (modulation of platelet aggregation, or coagulation cascade, for example). This is Snaclec 1 from Bitis arietans (African puff adder).